Consider the following 184-residue polypeptide: Dirigent protein 14 (184 aa).

The N-terminal stretch at 1–20 is a signal peptide; sequence MANQIYLFSLICLSVLLCQS. A disulfide bridge links cysteine 36 with cysteine 182. Asparagine 55 and asparagine 119 each carry an N-linked (GlcNAc...) asparagine glycan.

The protein belongs to the plant dirigent protein family. In terms of assembly, homodimer.

Its subcellular location is the secreted. It is found in the extracellular space. The protein localises to the apoplast. Dirigent proteins impart stereoselectivity on the phenoxy radical-coupling reaction, yielding optically active lignans from two molecules of coniferyl alcohol in the biosynthesis of lignans, flavonolignans, and alkaloids and thus plays a central role in plant secondary metabolism. The polypeptide is Dirigent protein 14 (DIR14) (Arabidopsis thaliana (Mouse-ear cress)).